We begin with the raw amino-acid sequence, 527 residues long: Inositolphosphotransferase 1 (527 aa).

The Cytoplasmic portion of the chain corresponds to 1–24 (MNVIFSLASFVKNMYNASLNQRNL). The chain crosses the membrane as a helical span at residues 25 to 45 (ISLPFNFMLNFAPVFIWLSIF). The Lumenal segment spans residues 46–99 (KRAGLIPIRLRPDIHSKFAFFADQFLFGDYWHELTVQLPDNTSKLFFWSFISSS). The chain crosses the membrane as a helical span at residues 100 to 120 (AFLLVFLICIPFAIWYYIYYI). The Cytoplasmic segment spans residues 121-152 (KHVNYNLLEWFANIFHYPCKRKQRPIQKRFRT). Residues 153–173 (IFIPFALPLFTFVILNIDHFF) form a helical membrane-spanning segment. At 174–190 (AYQSDANFTKTKDLLAW) the chain is on the lumenal side. Residues 191-211 (FSYVILHLTAPILTAVYLYVF) traverse the membrane as a helical segment. The Cytoplasmic portion of the chain corresponds to 212–219 (QPPGTLKC). Residues 220-240 (FSFALGLQNIAGVLTHLLVPM) traverse the membrane as a helical segment. Topologically, residues 241-288 (ASPWFTHLYGIDDTEHVNYTQEGFAAGLIRVDSHLGTHLNTKGFHMSP) are lumenal. The helical transmembrane segment at 289-309 (IVFGAVPSLHSAIAFQCFLFL) threads the bilayer. Over 310–435 (VSRSTSLKHR…KWIFKIVNDG (126 aa)) the chain is Cytoplasmic. A disordered region spans residues 331–404 (NDSSTFKLSE…GGGDGSIINS (74 aa)). Low complexity predominate over residues 376-389 (ERSSSPSSSFTVSS). Residues 436 to 456 (FIPKFWAILYIILQWWATMYL) form a helical membrane-spanning segment. Topologically, residues 457–461 (DHHYR) are lumenal. A helical transmembrane segment spans residues 462-482 (FDLFVGVLYAMTSFIIINWFV). Over 483-527 (LQPKVLKKWIHIRLGDKVDTRNEARTFGMRVFCGTKMEWFFDPLA) the chain is Cytoplasmic.

The protein localises to the golgi apparatus membrane. The catalysed reaction is an alpha-D-mannosyl-(1&lt;-&gt;6)-1D-myo-inositol-1-phospho-N-[(R)-2-hydroxy-very-long-chain fatty acyl]-(R)-4-hydroxysphingoid base + a 1,2-diacyl-sn-glycero-3-phospho-(1D-myo-inositol) = an alpha-D-mannosyl-6-(1D-myo-inositol phospho)-(1&lt;-&gt;6)-1D-myo-inositol-1-phospho-N-[(R)-2-hydroxy-very-long-chain fatty acyl]-(R)-4-hydroxysphingoid base + a 1,2-diacyl-sn-glycerol. It carries out the reaction a mannosylinositol-1-phospho-N-acyl-sphingoid base + a 1,2-diacyl-sn-glycero-3-phospho-(1D-myo-inositol) = an inositol phosphomannosylnositol-1-phospho-N-acylsphingoid base + a 1,2-diacyl-sn-glycerol. The enzyme catalyses a mannosylinositol-1-phospho-N-(2-hydroxyacyl)-4R-hydroxysphingoid base + a 1,2-diacyl-sn-glycero-3-phospho-(1D-myo-inositol) = an inositol phosphomannosylnositol-1-phospho-N-(2-hydroxyacyl)-4R-hydroxysphingoid base + a 1,2-diacyl-sn-glycerol. Its function is as follows. Catalyzes the addition of a phosphorylinositol group onto mannosyl phosphorylinositol ceramide (MIPC) to form mannosyl diphosphorylinositol ceramide (M(IP)2C), the major sphingolipid in membranes of S.cerevisiae. This is Inositolphosphotransferase 1 from Saccharomyces cerevisiae (strain ATCC 204508 / S288c) (Baker's yeast).